A 203-amino-acid polypeptide reads, in one-letter code: Large ribosomal subunit protein bL25 (203 aa).

This sequence belongs to the bacterial ribosomal protein bL25 family. CTC subfamily. In terms of assembly, part of the 50S ribosomal subunit; part of the 5S rRNA/L5/L18/L25 subcomplex. Contacts the 5S rRNA. Binds to the 5S rRNA independently of L5 and L18.

In terms of biological role, this is one of the proteins that binds to the 5S RNA in the ribosome where it forms part of the central protuberance. The sequence is that of Large ribosomal subunit protein bL25 from Cupriavidus pinatubonensis (strain JMP 134 / LMG 1197) (Cupriavidus necator (strain JMP 134)).